The sequence spans 334 residues: MRKFVFLMIIETIHIILKILIIVIPLLVAVAYLTLAERKVLGYMQARKGPNVVGVYGLLQPLADGIKLFTKELVIPHYANLFIYVAAPVLSFTLALIAWGVIPYDKGVVISDLKIGILFTLAVSSISVYAILMSGWASQSKYAFLGAIRAAAQMISYEVSIGLIIITVILCVGSLNITEIVLAQSSGIWFFFPLFPVAMMFFASALAETNRAPFDLTEGESELVSGYNVEYASMSFALFFLAEYAHIILMSCLTTILFLGGWLSPIVFFKGGPAWFGLKTSFIILLFIWVRASFPRMRYDQLMALLWKSYLPLSLAFVVLVASLLFGLNGLPPS.

The next 9 membrane-spanning stretches (helical) occupy residues 4–24 (FVFLMIIETIHIILKILIIVI), 82–102 (FIYVAAPVLSFTLALIAWGVI), 115–135 (IGILFTLAVSSISVYAILMSG), 161–181 (IGLIIITVILCVGSLNITEIV), 187–207 (GIWFFFPLFPVAMMFFASALA), 222–242 (ELVSGYNVEYASMSFALFFLA), 247–267 (IILMSCLTTILFLGGWLSPIV), 268–288 (FFKGGPAWFGLKTSFIILLFI), and 311–331 (LPLSLAFVVLVASLLFGLNGL).

This sequence belongs to the complex I subunit 1 family.

The protein resides in the mitochondrion inner membrane. It carries out the reaction a ubiquinone + NADH + 5 H(+)(in) = a ubiquinol + NAD(+) + 4 H(+)(out). Functionally, core subunit of the mitochondrial membrane respiratory chain NADH dehydrogenase (Complex I) that is believed to belong to the minimal assembly required for catalysis. Complex I functions in the transfer of electrons from NADH to the respiratory chain. The immediate electron acceptor for the enzyme is believed to be ubiquinone. In Metridium senile (Brown sea anemone), this protein is NADH-ubiquinone oxidoreductase chain 1 (ND1).